The sequence spans 1361 residues: DNA-directed RNA polymerase subunit beta (1361 aa).

The protein belongs to the RNA polymerase beta chain family. The RNAP catalytic core consists of 2 alpha, 1 beta, 1 beta' and 1 omega subunit. When a sigma factor is associated with the core the holoenzyme is formed, which can initiate transcription.

The catalysed reaction is RNA(n) + a ribonucleoside 5'-triphosphate = RNA(n+1) + diphosphate. Its function is as follows. DNA-dependent RNA polymerase catalyzes the transcription of DNA into RNA using the four ribonucleoside triphosphates as substrates. The sequence is that of DNA-directed RNA polymerase subunit beta from Cellvibrio japonicus (strain Ueda107) (Pseudomonas fluorescens subsp. cellulosa).